The following is a 138-amino-acid chain: Transcription antitermination protein NusB (138 aa).

This sequence belongs to the NusB family.

Its function is as follows. Involved in transcription antitermination. Required for transcription of ribosomal RNA (rRNA) genes. Binds specifically to the boxA antiterminator sequence of the ribosomal RNA (rrn) operons. This is Transcription antitermination protein NusB from Colwellia psychrerythraea (strain 34H / ATCC BAA-681) (Vibrio psychroerythus).